The sequence spans 68 residues: Molybdenum-pterin-binding protein 2 (68 aa).

Residues 2-68 (SISARNQLKG…VKSTDVMILA (67 aa)) enclose the Mop domain.

Its function is as follows. Binds one mole of molybdenum per mole of protein and contains a pterin. This Clostridium pasteurianum protein is Molybdenum-pterin-binding protein 2 (mopII).